A 608-amino-acid chain; its full sequence is Serine/threonine-protein kinase ROP17 (608 aa).

Residues 1–21 (MELVLCFVIITISGVIRESSA) form the signal peptide. Residue asparagine 76 is glycosylated (N-linked (GlcNAc...) asparagine). A Protein kinase domain is found at 283-579 (LKKRGFLGGG…QQALEQFSLL (297 aa)). ATP-binding positions include 289 to 297 (LGGGGFGLV) and lysine 312. Aspartate 436 functions as the Proton acceptor in the catalytic mechanism.

Belongs to the protein kinase superfamily. Ser/Thr protein kinase family. As to quaternary structure, interacts with ROP5; interaction with ROP5 does not affect kinase activity. Interacts with human BCL2; the interaction probably promotes BCL2 phosphorylation and degradation.

The protein localises to the secreted. The protein resides in the cytoplasmic vesicle. It is found in the secretory vesicle. Its subcellular location is the rhoptry. It localises to the parasitophorous vacuole membrane. It catalyses the reaction L-threonyl-[protein] + ATP = O-phospho-L-threonyl-[protein] + ADP + H(+). The catalysed reaction is L-seryl-[protein] + ATP = O-phospho-L-seryl-[protein] + ADP + H(+). In terms of biological role, protein kinase. Virulence factor. Promotes migration of Toxoplasma-infected macrophages through collagen matrix, facilitating parasite transport through tissues and systemic dissemination. Plays a role in the translocation of dense granule effectors, such as GRA16 and GRA24, across the parasitophorous vacuole membrane in Toxoplasma-infected host cells. Phosphorylates mouse IRGB6 (TGTP1/TGTP2), an immunity-related GTPase (IRG) that protects mice from infection by certain intracellular pathogens; the phosphorylation leads to the disassembly of IRGB6 polymers into monomers and dimers. May modulate gene expression in human cells. Promotes autophagy in human cells via modulation of the BCL2-BECN1 pathway. The polypeptide is Serine/threonine-protein kinase ROP17 (Toxoplasma gondii).